Reading from the N-terminus, the 241-residue chain is Demethylmenaquinone methyltransferase (241 aa).

Residues Thr60, Asp81, and 106–107 (DA) each bind S-adenosyl-L-methionine.

This sequence belongs to the class I-like SAM-binding methyltransferase superfamily. MenG/UbiE family.

The enzyme catalyses a 2-demethylmenaquinol + S-adenosyl-L-methionine = a menaquinol + S-adenosyl-L-homocysteine + H(+). It functions in the pathway quinol/quinone metabolism; menaquinone biosynthesis; menaquinol from 1,4-dihydroxy-2-naphthoate: step 2/2. Functionally, methyltransferase required for the conversion of demethylmenaquinol (DMKH2) to menaquinol (MKH2). The protein is Demethylmenaquinone methyltransferase of Staphylococcus carnosus (strain TM300).